A 545-amino-acid polypeptide reads, in one-letter code: MHRIYTFLIFISQLALGLSNNPDIPIQYELANNIMENYQKGLIPKVRKGSPINVTLSLQLYQIIQVNEPQQYLLLNAWAVERWVDQMLGWDPSEFDNETEIMARHDDIWLPDTTLYNSLEMDDSASKKLTHVKLTTLGKNQGAMVELLYPTIYKISCLLNLKYFPFDTQTCRMTFGSWSFDNSLIDYFPRTFTNGPIGLANFLENDAWSVLGTKVNREEKKYTCCPVNYTLLHYDVVIQRKPLYYVLNLIAPTAVITFISIIGFFTSVNPFTNFCNVSSSVHDLRQEKITLGITTLLSMSIMIFMVSDKMPSTSTCVPLIALFYTLMITIISVGTLAASSVIFVQKLGSIGNPPASKTMKWTHRIAPFVLIQMPLVMKQAYAKRAKEEKHRKRMSRKNSMWTKVYHLARDHSKLMETVPDGAVKFNQISDFKNNDIGNMESPRMAESQTSETFAAPMDTSFTESLHIPELNRVASSNSIQSVLKPTEIQLTPYCTRNIVELEWDWVAAVLERVFLIFFTICFLFSAIGINLYGWYIWYTENHFLF.

Positions 1 to 19 are cleaved as a signal peptide; it reads MHRIYTFLIFISQLALGLS. Topologically, residues 20 to 244 are extracellular; that stretch reads NNPDIPIQYE…DVVIQRKPLY (225 aa). N-linked (GlcNAc...) asparagine glycans are attached at residues N53 and N97. 2 disulfides stabilise this stretch: C157/C171 and C224/C225. N228 carries N-linked (GlcNAc...) asparagine glycosylation. The chain crosses the membrane as a helical span at residues 245 to 265; the sequence is YVLNLIAPTAVITFISIIGFF. N276 is a glycosylation site (N-linked (GlcNAc...) asparagine). 2 consecutive transmembrane segments (helical) span residues 287–307 and 317–337; these read EKIT…FMVS and VPLI…GTLA. Over 338 to 512 the chain is Cytoplasmic; that stretch reads ASSVIFVQKL…WDWVAAVLER (175 aa). Residues 513 to 533 form a helical membrane-spanning segment; it reads VFLIFFTICFLFSAIGINLYG.

This sequence belongs to the ligand-gated ion channel (TC 1.A.9) family. Acetylcholine receptor (TC 1.A.9.1) subfamily. As to expression, expressed in the body wall muscles that are arranged into four longitudinal bundles, some mechanosensory neurons, the head muscles and multiple interneurons. Not expressed in motor neurons (at protein level).

Its subcellular location is the cell membrane. In terms of biological role, betaine receptor that functions as a ligand-gated non-selective monovalent cation channel in mechanosensory neurons to maintain basal levels of locomotion. The channel is permeable to Na(+) and K(+) but not to Ba(2+) or Ca(2+) ions. Elicits current in response to betaine, very weak current in response to choline, virtually no current in response to acetylcholine and nicotine, and no current in response to glycine and GABA. This is Betaine receptor acr-23 from Caenorhabditis elegans.